A 69-amino-acid chain; its full sequence is Conotoxin reg3f (69 aa).

An N-terminal signal peptide occupies residues 1–20 (MMSKLGVLLTICLLLFPLSA). Residues 21 to 52 (LPLDGDQPADQPAERMQDISPEQNPLFHPDKR) constitute a propeptide that is removed on maturation. 3 disulfide bridges follow: C54-C68, C55-C66, and C60-C69. C69 is subject to Cysteine amide.

As to expression, expressed by the venom duct.

It localises to the secreted. The polypeptide is Conotoxin reg3f (Conus regius (Crown cone)).